The primary structure comprises 452 residues: METEVNVAEISALDYEGRGVTKVGGKTVFIKGALPSERVGFRIVRQKKQFDEAEAVAIFKVSDERTVPQCRYFERCGGCSLQHISPAAQVAFKQRMMEEQLERIGKVKPKQILLPIYGHVWHYRDRARFSVSLDKLCRLKLGFQAKKTNDVVDISSCMLLPKPVSDKLSAIRGLLQDLAEEGSVARFAEFYRGSEITVLNIAFKSKLRQNEENRIRQWFDSELSDGWQVWLQIEGGVSQPFYPKTDKTLKYTLPEFGIEMPFRPGDFTQINTDTNRLMVSRVVKMLDIRRGERIADLFCGLGNFSLPMAKSGADVVGIEGAENLVRRARQNARLNGCDRQTDFIAANLFDCTEKTVASWERFDKMLIDPPRSGAYEVVKSLHTPYLPQKIVYVSCNPSTLARDAGVLVEKGYMLSQAGIMNMFAQTSHTESVAVFDLLPQTGKNFLKIKGKD.

In terms of domain architecture, TRAM spans 1 to 57 (METEVNVAEISALDYEGRGVTKVGGKTVFIKGALPSERVGFRIVRQKKQFDEAEAVA). Positions 70, 76, 79, and 157 each coordinate [4Fe-4S] cluster. Residues glutamine 269, phenylalanine 298, asparagine 303, glutamate 319, asparagine 347, and aspartate 368 each coordinate S-adenosyl-L-methionine. The active-site Nucleophile is the cysteine 395.

Belongs to the class I-like SAM-binding methyltransferase superfamily. RNA M5U methyltransferase family. RlmD subfamily.

It catalyses the reaction uridine(1939) in 23S rRNA + S-adenosyl-L-methionine = 5-methyluridine(1939) in 23S rRNA + S-adenosyl-L-homocysteine + H(+). Its function is as follows. Catalyzes the formation of 5-methyl-uridine at position 1939 (m5U1939) in 23S rRNA. This is 23S rRNA (uracil(1939)-C(5))-methyltransferase RlmD from Neisseria lactamica (strain 020-06).